A 338-amino-acid chain; its full sequence is Lumican (338 aa).

An N-terminal signal peptide occupies residues 1-18 (MNVCTFTLVLALVGSVSG). Q19 is modified (pyrrolidone carboxylic acid). Sulfotyrosine occurs at positions 20, 21, 23, and 30. The 39-residue stretch at 28–66 (FMYGELSPNCAPECNCPHSYPTAMYCDDLKLKSVPMVPP) folds into the LRRNT domain. LRR repeat units lie at residues 67–88 (GIKY…AFEN), 91–114 (DLQW…VFSK), 117–137 (QLKK…PLPK), 138–159 (SLQD…DGLV), 160–181 (NLTF…ASLK), 185–205 (SLEY…GLPT), 206–227 (SLLT…YFNR), and 230–250 (GLQY…PGNS). N-linked (GlcNAc...) (keratan sulfate) asparagine glycosylation occurs at N88. N127 is a glycosylation site (N-linked (GlcNAc...) (keratan sulfate) asparagine). An N-linked (GlcNAc...) (keratan sulfate) asparagine glycan is attached at N160. A glycan (N-linked (GlcNAc...) (keratan sulfate) asparagine) is linked at N252. LRR repeat units follow at residues 255-276 (SLLE…NENL) and 277-296 (ENYY…SFCK). C295 and C328 are joined by a disulfide. Residue S304 is modified to Phosphoserine. One copy of the LRR 11 repeat lies at 305–326 (KIKHLRLDGNPLTQSSLPPDMY).

Belongs to the small leucine-rich proteoglycan (SLRP) family. SLRP class II subfamily. In terms of assembly, binds to laminin. In terms of processing, contains keratan sulfate.

The protein resides in the secreted. The protein localises to the extracellular space. Its subcellular location is the extracellular matrix. The sequence is that of Lumican (Lum) from Rattus norvegicus (Rat).